The primary structure comprises 266 residues: 4-hydroxy-tetrahydrodipicolinate reductase (266 aa).

11 to 16 (GALGKM) provides a ligand contact to NAD(+). Lys39 provides a ligand contact to NADP(+). Residue 100 to 102 (GTT) coordinates NAD(+). His156 acts as the Proton donor/acceptor in catalysis. Residue His157 coordinates (S)-2,3,4,5-tetrahydrodipicolinate. The Proton donor role is filled by Lys160. 166 to 167 (GT) lines the (S)-2,3,4,5-tetrahydrodipicolinate pocket.

Belongs to the DapB family.

The protein localises to the cytoplasm. The catalysed reaction is (S)-2,3,4,5-tetrahydrodipicolinate + NAD(+) + H2O = (2S,4S)-4-hydroxy-2,3,4,5-tetrahydrodipicolinate + NADH + H(+). The enzyme catalyses (S)-2,3,4,5-tetrahydrodipicolinate + NADP(+) + H2O = (2S,4S)-4-hydroxy-2,3,4,5-tetrahydrodipicolinate + NADPH + H(+). Its pathway is amino-acid biosynthesis; L-lysine biosynthesis via DAP pathway; (S)-tetrahydrodipicolinate from L-aspartate: step 4/4. In terms of biological role, catalyzes the conversion of 4-hydroxy-tetrahydrodipicolinate (HTPA) to tetrahydrodipicolinate. This Syntrophomonas wolfei subsp. wolfei (strain DSM 2245B / Goettingen) protein is 4-hydroxy-tetrahydrodipicolinate reductase.